The chain runs to 192 residues: Leucine-rich repeat-containing protein 51 (192 aa).

LRR repeat units lie at residues 49-71 (SLTQSLWLNNNVLNDLKDFNQVV), 80-101 (NLAWIDLSFNDLTTIDPVLTTF), and 103-124 (NLSVLYLHGNGIHRLGEVNKLA). The LRRCT domain occupies 137–175 (NPIEEEKGYRQYVLCNLPRITTFDFSGVTRADRSTAEVW).

Widely expressed in adult and embryonic tissues. Expressed in the developing choroid plexus from 12.5 dpc and in the epithelium of the developing airway tract from 14.5 dpc. Also expressed in the postnatal inner ear.

The protein resides in the cytoplasm. The polypeptide is Leucine-rich repeat-containing protein 51 (Mus musculus (Mouse)).